Reading from the N-terminus, the 550-residue chain is MSRQLNIKSGGDKGGFSGHSAVVLRKVGGSAASYRAPSKGAGAAFGSRSLYSLCRGDLCVPLKVAGSSVRTGGYNFRLGSGYGGVRASSFAGSMFGSVVLGPVCPSMCPPGGIHQVTVNKSLLAPLNVELDPEIQKVRAQEREQIMALNNKFASFIDKVRFLEQQNQVLGTKWELLQQMDLNNCRKNLEPILEGYIGNLRKQLEMLSGDRLRLDSELKGMRDLVEDYKKRYEVEINQRTAAENDFVVLKKDADAAYTVKVELQAKVDSLDKDIKFLKCLYDAEVAQIQTHTSETSVILSMDNNRYLDLDSIIAEVRAQYEDIALKSKAEAEALYQSKIQELQLAAGRHGDDLKHTKNEMSELNRLIQRIRCEIANVKKQAFSVCSKPAPCPLQCANLETAIADAEQRGDSALKDARAKLDELEAAMHQAKEELARMLREYQELMSLKLALDMEIATYSKLLEGEECWMSGENPSSVSISVISSSASSFGYHPGSSASTDLGASTMASTGTSSSSSTQSGQTRAKGARVGDPKDSQDKSTPVSSRARKAAR.

Positions 1 to 140 (MSRQLNIKSG…DPEIQKVRAQ (140 aa)) are head. Residues 141 to 176 (EREQIMALNNKFASFIDKVRFLEQQNQVLGTKWELL) are coil 1A. The IF rod domain occupies 141–468 (EREQIMALNN…KLLEGEECWM (328 aa)). The segment at 177 to 195 (QQMDLNNCRKNLEPILEGY) is linker 1. Positions 196 to 287 (IGNLRKQLEM…CLYDAEVAQI (92 aa)) are coil 1B. A linker 12 region spans residues 288–311 (QTHTSETSVILSMDNNRYLDLDSI). The tract at residues 312-464 (IAEVRAQYED…ATYSKLLEGE (153 aa)) is coil 2. Residues 465-550 (ECWMSGENPS…VSSRARKAAR (86 aa)) are tail. Residues 491–550 (HPGSSASTDLGASTMASTGTSSSSSTQSGQTRAKGARVGDPKDSQDKSTPVSSRARKAAR) form a disordered region. Positions 502-521 (ASTMASTGTSSSSSTQSGQT) are enriched in low complexity. Over residues 527-536 (RVGDPKDSQD) the composition is skewed to basic and acidic residues.

It belongs to the intermediate filament family. Heterotetramer of two type I and two type II keratins.

In terms of biological role, has a role in hair formation. Specific component of keratin intermediate filaments in the inner root sheath (IRS) of the hair follicle. In Bos taurus (Bovine), this protein is Keratin, type II cytoskeletal 74 (KRT74).